The primary structure comprises 72 residues: High-potential iron-sulfur protein isozyme 1 (72 aa).

Residue Ala-1 is modified to N-carbamoylalanine; partial. [4Fe-4S] cluster-binding residues include Cys-34, Cys-37, Cys-51, and Cys-65.

This sequence belongs to the high-potential iron-sulfur protein (HiPIP) family. In terms of assembly, homodimer.

Its function is as follows. Specific class of high-redox-potential 4Fe-4S ferredoxins. Functions in anaerobic electron transport in most purple and in some other photosynthetic bacteria and in at least one genus (Paracoccus) of halophilic, denitrifying bacteria. This Ectothiorhodospira mobilis protein is High-potential iron-sulfur protein isozyme 1.